The following is a 346-amino-acid chain: Sesquiterpene synthase Agr1 (346 aa).

Positions 98, 234, 238, and 242 each coordinate Mg(2+). The DDXXD motif motif lies at 98 to 102; that stretch reads DNLSD. Arg-322 and Tyr-323 together coordinate (2E,6E)-farnesyl diphosphate.

The protein belongs to the terpene synthase family. Mg(2+) serves as cofactor.

The enzyme catalyses (2E,6E)-farnesyl diphosphate = delta-cadinene + diphosphate. It catalyses the reaction (2E,6E)-farnesyl diphosphate = alpha-muurolene + diphosphate. The catalysed reaction is (2E,6E)-farnesyl diphosphate = gamma-muurolene + diphosphate. It carries out the reaction (2E,6E)-farnesyl diphosphate = alpha-selinene + diphosphate. Functionally, terpene cyclase that catalyzes the cyclization of farnesyl diphosphate (FPP) to various sesquiterpenes, including alpha-muurolene, gamma-muurolene, alpha-selinene, beta-selinene, delta-cadinene, alpha-cadinol and delta-cadinol. Delta-cadinene is the major product of Agr1. The sequence is that of Sesquiterpene synthase Agr1 from Cyclocybe aegerita (Black poplar mushroom).